Reading from the N-terminus, the 122-residue chain is Large ribosomal subunit protein uL14 (122 aa).

This sequence belongs to the universal ribosomal protein uL14 family. As to quaternary structure, part of the 50S ribosomal subunit. Forms a cluster with proteins L3 and L19. In the 70S ribosome, L14 and L19 interact and together make contacts with the 16S rRNA in bridges B5 and B8.

Binds to 23S rRNA. Forms part of two intersubunit bridges in the 70S ribosome. The polypeptide is Large ribosomal subunit protein uL14 (Mycobacterium ulcerans (strain Agy99)).